A 248-amino-acid polypeptide reads, in one-letter code: PF03932 family protein CutC (248 aa).

Belongs to the CutC family. As to quaternary structure, homodimer.

The protein localises to the cytoplasm. The polypeptide is PF03932 family protein CutC (Escherichia coli O7:K1 (strain IAI39 / ExPEC)).